A 150-amino-acid polypeptide reads, in one-letter code: Transcriptional repressor NrdR (150 aa).

A zinc finger spans residues 3–34 (CPFCAFADSKVVDSRPDKEGSTIRRRRECESC). In terms of domain architecture, ATP-cone spans 49-139 (PLVIKKDGRR…VYRSFKDITE (91 aa)).

The protein belongs to the NrdR family. Zn(2+) is required as a cofactor.

Its function is as follows. Negatively regulates transcription of bacterial ribonucleotide reductase nrd genes and operons by binding to NrdR-boxes. The sequence is that of Transcriptional repressor NrdR from Geotalea daltonii (strain DSM 22248 / JCM 15807 / FRC-32) (Geobacter daltonii).